We begin with the raw amino-acid sequence, 248 residues long: 2,3-bisphosphoglycerate-dependent phosphoglycerate mutase (248 aa).

Substrate is bound by residues 8-15, 21-22, Arg60, 87-90, Lys98, and 114-115; these read RHGESVWN, TG, ERHY, and RR. The active-site Tele-phosphohistidine intermediate is the His9. The Proton donor/acceptor role is filled by Glu87. The tract at residues 116 to 135 is disordered; it reads SYDTPPPPMEVSDPRHPSHD. A substrate-binding site is contributed by 183 to 184; that stretch reads GN.

The protein belongs to the phosphoglycerate mutase family. BPG-dependent PGAM subfamily. As to quaternary structure, homodimer.

It catalyses the reaction (2R)-2-phosphoglycerate = (2R)-3-phosphoglycerate. It functions in the pathway carbohydrate degradation; glycolysis; pyruvate from D-glyceraldehyde 3-phosphate: step 3/5. In terms of biological role, catalyzes the interconversion of 2-phosphoglycerate and 3-phosphoglycerate. The protein is 2,3-bisphosphoglycerate-dependent phosphoglycerate mutase of Bdellovibrio bacteriovorus (strain ATCC 15356 / DSM 50701 / NCIMB 9529 / HD100).